The sequence spans 85 residues: Antibacterial factor-related peptide 1 (85 aa).

The signal sequence occupies residues 1-19 (MLYFCLLLVLLLPNNGVSS).

As to expression, expressed in the pharynx and body wall muscle.

It localises to the secreted. This is Antibacterial factor-related peptide 1 from Caenorhabditis elegans.